Consider the following 209-residue polypeptide: Thymidylate kinase (209 aa).

7-14 lines the ATP pocket; that stretch reads GIDGAGKS.

This sequence belongs to the thymidylate kinase family.

The catalysed reaction is dTMP + ATP = dTDP + ADP. Phosphorylation of dTMP to form dTDP in both de novo and salvage pathways of dTTP synthesis. The polypeptide is Thymidylate kinase (Mycoplasma mobile (strain ATCC 43663 / 163K / NCTC 11711) (Mesomycoplasma mobile)).